Consider the following 438-residue polypeptide: Protein phosphatase 2C homolog 2 (438 aa).

The PPM-type phosphatase domain occupies 23–294; that stretch reads IYGVSAMQGW…DNMTMVIIGF (272 aa). Mn(2+) is bound by residues D67, G68, D236, and D285. Positions 370–438 are disordered; sequence VLTGSDDTEM…EKTPEESKKD (69 aa). Residues 375-387 show a composition bias toward acidic residues; it reads DDTEMFDNADEDK. The segment covering 398 to 438 has biased composition (basic and acidic residues); the sequence is GKTDAKEETEAKPAPEAESSKPADGSEKKQDEKTPEESKKD.

The protein belongs to the PP2C family. The cofactor is Mg(2+). Requires Mn(2+) as cofactor.

It is found in the cytoplasm. The protein localises to the nucleus. The catalysed reaction is O-phospho-L-seryl-[protein] + H2O = L-seryl-[protein] + phosphate. It carries out the reaction O-phospho-L-threonyl-[protein] + H2O = L-threonyl-[protein] + phosphate. Its function is as follows. Dephosphorylating regulator for many key proteins. Negatively regulates the endoplasmic reticulum unfolded protein response. This is Protein phosphatase 2C homolog 2 from Hypocrea jecorina (strain QM6a) (Trichoderma reesei).